Consider the following 397-residue polypeptide: Succinate--CoA ligase [ADP-forming] subunit beta (397 aa).

The region spanning 9–253 (KEILASYGVR…IREENPIEVE (245 aa)) is the ATP-grasp domain. ATP is bound by residues Lys-50, 57-59 (GRG), Val-106, and Glu-116. Residues Asn-208 and Asp-222 each coordinate Mg(2+). Substrate contacts are provided by residues Asn-273 and 330–332 (GIV).

The protein belongs to the succinate/malate CoA ligase beta subunit family. In terms of assembly, heterotetramer of two alpha and two beta subunits. Mg(2+) serves as cofactor.

The catalysed reaction is succinate + ATP + CoA = succinyl-CoA + ADP + phosphate. It catalyses the reaction GTP + succinate + CoA = succinyl-CoA + GDP + phosphate. Its pathway is carbohydrate metabolism; tricarboxylic acid cycle; succinate from succinyl-CoA (ligase route): step 1/1. Functionally, succinyl-CoA synthetase functions in the citric acid cycle (TCA), coupling the hydrolysis of succinyl-CoA to the synthesis of either ATP or GTP and thus represents the only step of substrate-level phosphorylation in the TCA. The beta subunit provides nucleotide specificity of the enzyme and binds the substrate succinate, while the binding sites for coenzyme A and phosphate are found in the alpha subunit. This is Succinate--CoA ligase [ADP-forming] subunit beta from Flavobacterium johnsoniae (strain ATCC 17061 / DSM 2064 / JCM 8514 / BCRC 14874 / CCUG 350202 / NBRC 14942 / NCIMB 11054 / UW101) (Cytophaga johnsonae).